Consider the following 115-residue polypeptide: U3-lycotoxin-Ls1u (115 aa).

The signal sequence occupies residues 1–20; it reads MKFVLLFGVLLVTLFSYSSA. Residues 21 to 44 constitute a propeptide that is removed on maturation; it reads EMLDDFDQADEDELLSLIEKEEAR. Intrachain disulfides connect Cys48–Cys63, Cys55–Cys72, and Cys62–Cys87.

This sequence belongs to the neurotoxin 19 (CSTX) family. 01 subfamily. As to expression, expressed by the venom gland.

The protein resides in the secreted. This chain is U3-lycotoxin-Ls1u, found in Lycosa singoriensis (Wolf spider).